Reading from the N-terminus, the 401-residue chain is Argininosuccinate synthase (401 aa).

An ATP-binding site is contributed by 8 to 16 (AYSGGLDTS). Tyr-85 serves as a coordination point for L-citrulline. Gly-115 is a binding site for ATP. The L-aspartate site is built by Thr-117, Asn-121, and Asp-122. Asn-121 is a binding site for L-citrulline. The L-citrulline site is built by Arg-125, Ser-173, Glu-258, and Tyr-270.

The protein belongs to the argininosuccinate synthase family. Type 1 subfamily. As to quaternary structure, homotetramer.

It localises to the cytoplasm. It catalyses the reaction L-citrulline + L-aspartate + ATP = 2-(N(omega)-L-arginino)succinate + AMP + diphosphate + H(+). Its pathway is amino-acid biosynthesis; L-arginine biosynthesis; L-arginine from L-ornithine and carbamoyl phosphate: step 2/3. The sequence is that of Argininosuccinate synthase from Staphylococcus aureus (strain bovine RF122 / ET3-1).